Consider the following 642-residue polypeptide: Threonine--tRNA ligase (642 aa).

In terms of domain architecture, TGS spans 1–61 (MPVITLPDGS…ESDAQLAIIT (61 aa)). Positions 243-534 (DHRKIGKQLD…LTEEYAGFFP (292 aa)) are catalytic. 3 residues coordinate Zn(2+): cysteine 334, histidine 385, and histidine 511.

Belongs to the class-II aminoacyl-tRNA synthetase family. Homodimer. It depends on Zn(2+) as a cofactor.

Its subcellular location is the cytoplasm. The catalysed reaction is tRNA(Thr) + L-threonine + ATP = L-threonyl-tRNA(Thr) + AMP + diphosphate + H(+). Functionally, catalyzes the attachment of threonine to tRNA(Thr) in a two-step reaction: L-threonine is first activated by ATP to form Thr-AMP and then transferred to the acceptor end of tRNA(Thr). Also edits incorrectly charged L-seryl-tRNA(Thr). The sequence is that of Threonine--tRNA ligase from Yersinia pseudotuberculosis serotype O:1b (strain IP 31758).